We begin with the raw amino-acid sequence, 791 residues long: Putative DNA (cytosine-5)-methyltransferase CMT1 (791 aa).

Positions 37 to 59 are disordered; the sequence is YQSKKTKLQAPTKKPANKGGKKE. The 121-residue stretch at 79-199 folds into the BAH domain; the sequence is VLINLNDDVY…VPYLNFTSAD (121 aa). The SAM-dependent MTase C5-type domain occupies 225-768; sequence KFLLDLYSGC…YAFGMASQGL (544 aa). The stretch at 308 to 333 forms a coiled coil; it reads VESISELEDEEVEENDDIDEASTGAE. The 66-residue stretch at 339-404 folds into the Chromo domain; it reads FEVEKFLGIM…DGFKSHLLPL (66 aa). Cys417 is an active-site residue.

Belongs to the class I-like SAM-binding methyltransferase superfamily. C5-methyltransferase family. As to expression, expressed in flowers. Not detected in leaves, roots, seedlings and plants prior formation of flower buds.

Its subcellular location is the nucleus. It carries out the reaction a 2'-deoxycytidine in DNA + S-adenosyl-L-methionine = a 5-methyl-2'-deoxycytidine in DNA + S-adenosyl-L-homocysteine + H(+). In terms of biological role, may be involved in the CpXpG methylation and in gene silencing. In Arabidopsis thaliana (Mouse-ear cress), this protein is Putative DNA (cytosine-5)-methyltransferase CMT1 (CMT1).